A 147-amino-acid polypeptide reads, in one-letter code: Arginine vasopressin-induced protein 1 (147 aa).

Disordered regions lie at residues 1–24 (MGTPASVVSEPPPWQAPIEARGRK) and 104–147 (LANP…QIRH). Over residues 105–119 (ANPQSATETASSEQY) the composition is skewed to polar residues. Basic residues predominate over residues 121–134 (HSRKKSARIRRNWR). Polar residues predominate over residues 137–147 (GPTSYLHQIRH).

In terms of biological role, may be involved in MAP kinase activation, epithelial sodium channel (ENaC) down-regulation and cell cycling. The protein is Arginine vasopressin-induced protein 1 (AVPI1) of Homo sapiens (Human).